The primary structure comprises 201 residues: Recombination protein RecR (201 aa).

The segment at Cys-57–Cys-72 adopts a C4-type zinc-finger fold. The region spanning Gly-81 to Pro-176 is the Toprim domain.

It belongs to the RecR family.

May play a role in DNA repair. It seems to be involved in an RecBC-independent recombinational process of DNA repair. It may act with RecF and RecO. In Yersinia pestis bv. Antiqua (strain Antiqua), this protein is Recombination protein RecR.